Reading from the N-terminus, the 138-residue chain is Unique cartilage matrix-associated protein (138 aa).

A signal peptide spans 1–26 (MKRNQVLFLTCAAAVVFLAVLHVGES). Residues 28-64 (AVRSKDDPAPDKKESLKSKIFMQGSEASNFFKKRGKR) constitute a propeptide, ucma-N. The tract at residues 58–116 (FKKRGKRSPKSQDEINAENRQRLSADERRREYYEEQRNEFENHVEEEQDEQEERSREQI) is disordered. The span at 67–102 (KSQDEINAENRQRLSADERRREYYEEQRNEFENHVE) shows a compositional bias: basic and acidic residues. Residues 69-118 (QDEINAENRQRLSADERRREYYEEQRNEFENHVEEEQDEQEERSREQIEQ) adopt a coiled-coil conformation. 4-carboxyglutamate occurs at positions 71, 75, 84, 88, 91, 92, 96, 98, 102, 103, 107, 110, 114, and 117.

The protein belongs to the UCMA family. Proteolytically cleaved by a furin-like convertase to generate a persistent C-terminal fragment found in almost the entire cartilage matrix, and affecting osteoblast differentiation. Post-translationally, sulfated on tyrosine residues.

It is found in the secreted. The protein resides in the extracellular space. Its subcellular location is the extracellular matrix. Functionally, may be involved in the negative control of osteogenic differentiation of osteochondrogenic precursor cells in peripheral zones of fetal cartilage and at the cartilage-bone interface. This is Unique cartilage matrix-associated protein (ucma) from Xenopus tropicalis (Western clawed frog).